The sequence spans 279 residues: Digeranylgeranylglyceryl phosphate synthase (279 aa).

8 helical membrane-spanning segments follow: residues Gly-5–Ala-25, Leu-27–Val-47, Phe-90–Val-110, Phe-127–Tyr-147, Ala-148–Leu-168, Lys-198–Tyr-218, Leu-219–Ala-239, and Thr-259–Leu-279.

It belongs to the UbiA prenyltransferase family. DGGGP synthase subfamily. Requires Mg(2+) as cofactor.

It is found in the cell membrane. The catalysed reaction is sn-3-O-(geranylgeranyl)glycerol 1-phosphate + (2E,6E,10E)-geranylgeranyl diphosphate = 2,3-bis-O-(geranylgeranyl)-sn-glycerol 1-phosphate + diphosphate. It participates in membrane lipid metabolism; glycerophospholipid metabolism. Its function is as follows. Prenyltransferase that catalyzes the transfer of the geranylgeranyl moiety of geranylgeranyl diphosphate (GGPP) to the C2 hydroxyl of (S)-3-O-geranylgeranylglyceryl phosphate (GGGP). This reaction is the second ether-bond-formation step in the biosynthesis of archaeal membrane lipids. This Methanoregula boonei (strain DSM 21154 / JCM 14090 / 6A8) protein is Digeranylgeranylglyceryl phosphate synthase.